A 535-amino-acid polypeptide reads, in one-letter code: Protein PyrBI (535 aa).

Positions 1–341 (MENKFMGRSL…MIAGKIGDDY (341 aa)) are aspartate carbamoyltransferase. The interval 342–370 (KGPEPKSCERVEDEDYIVEVPINNSKESK) is linker. An aspartate carbamoyltransferase regulatory region region spans residues 371–535 (VETFSEGVRP…FKEIWGEKKN (165 aa)). Residues cysteine 488, cysteine 493, cysteine 517, and cysteine 520 each contribute to the Zn(2+) site.

In the N-terminal section; belongs to the aspartate/ornithine carbamoyltransferase superfamily. ATCase family. It in the C-terminal section; belongs to the PyrI family.

The enzyme catalyses carbamoyl phosphate + L-aspartate = N-carbamoyl-L-aspartate + phosphate + H(+). Its pathway is pyrimidine metabolism; UMP biosynthesis via de novo pathway; (S)-dihydroorotate from bicarbonate: step 2/3. This Treponema denticola (strain ATCC 35405 / DSM 14222 / CIP 103919 / JCM 8153 / KCTC 15104) protein is Protein PyrBI (pyrBI).